Consider the following 290-residue polypeptide: Agroclavine dehydrogenase (290 aa).

The protein belongs to the fgaFS/easG family. Monomer.

It carries out the reaction agroclavine + NADP(+) = didehydroagroclavine + NADPH + H(+). Its pathway is alkaloid biosynthesis; ergot alkaloid biosynthesis. Its function is as follows. Agroclavine dehydrogenase; part of the gene cluster that mediates the biosynthesis of fungal ergot alkaloid. DmaW catalyzes the first step of ergot alkaloid biosynthesis by condensing dimethylallyl diphosphate (DMAP) and tryptophan to form 4-dimethylallyl-L-tryptophan. The second step is catalyzed by the methyltransferase easF that methylates 4-dimethylallyl-L-tryptophan in the presence of S-adenosyl-L-methionine, resulting in the formation of 4-dimethylallyl-L-abrine. The catalase easC and the FAD-dependent oxidoreductase easE then transform 4-dimethylallyl-L-abrine to chanoclavine-I which is further oxidized by easD in the presence of NAD(+), resulting in the formation of chanoclavine-I aldehyde. Agroclavine dehydrogenase easG then mediates the conversion of chanoclavine-I aldehyde to agroclavine via a non-enzymatic adduct reaction: the substrate is an iminium intermediate that is formed spontaneously from chanoclavine-I aldehyde in the presence of glutathione. The presence of easA is not required to complete this reaction. Further conversion of agroclavine to paspalic acid is a two-step process involving oxidation of agroclavine to elymoclavine and of elymoclavine to paspalic acid, the second step being performed by the elymoclavine oxidase cloA. Paspalic acid is then further converted to D-lysergic acid. Ergopeptines are assembled from D-lysergic acid and three different amino acids by the D-lysergyl-peptide-synthetases composed each of a monomudular and a trimodular nonribosomal peptide synthetase subunit. LpsB and lpsC encode the monomodular subunits responsible for D-lysergic acid activation and incorporation into the ergopeptine backbone. LpsA1 and A2 subunits encode the trimodular nonribosomal peptide synthetase assembling the tripeptide portion of ergopeptines. LpsA1 is responsible for formation of the major ergopeptine, ergotamine, and lpsA2 for alpha-ergocryptine, the minor ergopeptine of the total alkaloid mixture elaborated by C.purpurea. D-lysergyl-tripeptides are assembled by the nonribosomal peptide synthetases and released as N-(D-lysergyl-aminoacyl)-lactams. Cyclolization of the D-lysergyl-tripeptides is performed by the Fe(2+)/2-ketoglutarate-dependent dioxygenase easH which introduces a hydroxyl group into N-(D-lysergyl-aminoacyl)-lactam at alpha-C of the aminoacyl residue followed by spontaneous condensation with the terminal lactam carbonyl group. This Claviceps purpurea (strain 20.1) (Ergot fungus) protein is Agroclavine dehydrogenase.